The sequence spans 350 residues: MEERSMQKAGFLKEPIKHIGITKHNVVPMVEEMADMAFQARNLARAASIVDLMQKDKECAVILTLAGSLISAGLKQVIIDMLEHNMVDAIVSTGANIVDQDFFEALGFKHWKGSQFADDSELRELAIDRIYDTYIDEDELRVCDDTMAIIANSMQPGAYSSREFIVEMGKYIEEKGLDKNSIVYKAYEKGVPIFCPAFSDCSAGFGLVHHQWNNPDNHVSIDSVKDFRELTKIKIENDKTGIFMIGGGVPKNFTQDIVVAAEVLGYEDVSMHTYAVQITVADERDGALSGSTLKEASSWGKVDTVYEQMVFAEATVAMPLIAGYAYHKRNWEGRPERNFNAMLDAKPVNA.

This sequence belongs to the deoxyhypusine synthase family.

The protein is Deoxyhypusine synthase-like protein of Chlorobaculum parvum (strain DSM 263 / NCIMB 8327) (Chlorobium vibrioforme subsp. thiosulfatophilum).